The sequence spans 301 residues: Putative S-adenosyl-L-methionine-dependent methyltransferase MAP_3777 (301 aa).

S-adenosyl-L-methionine-binding positions include Asp126 and 155–156 (DL).

This sequence belongs to the UPF0677 family.

In terms of biological role, exhibits S-adenosyl-L-methionine-dependent methyltransferase activity. This is Putative S-adenosyl-L-methionine-dependent methyltransferase MAP_3777 from Mycolicibacterium paratuberculosis (strain ATCC BAA-968 / K-10) (Mycobacterium paratuberculosis).